Consider the following 142-residue polypeptide: Phosphoribosyl-AMP cyclohydrolase (142 aa).

Asp-85 serves as a coordination point for Mg(2+). Residue Cys-86 participates in Zn(2+) binding. Mg(2+)-binding residues include Asp-87 and Asp-89. Zn(2+) is bound by residues Cys-102 and Cys-109. Residues 120 to 142 (GEPPTPVGAGERQPASGTADAAP) form a disordered region.

This sequence belongs to the PRA-CH family. Homodimer. Mg(2+) is required as a cofactor. The cofactor is Zn(2+).

The protein localises to the cytoplasm. The catalysed reaction is 1-(5-phospho-beta-D-ribosyl)-5'-AMP + H2O = 1-(5-phospho-beta-D-ribosyl)-5-[(5-phospho-beta-D-ribosylamino)methylideneamino]imidazole-4-carboxamide. It functions in the pathway amino-acid biosynthesis; L-histidine biosynthesis; L-histidine from 5-phospho-alpha-D-ribose 1-diphosphate: step 3/9. Catalyzes the hydrolysis of the adenine ring of phosphoribosyl-AMP. This Acidothermus cellulolyticus (strain ATCC 43068 / DSM 8971 / 11B) protein is Phosphoribosyl-AMP cyclohydrolase.